A 378-amino-acid chain; its full sequence is Alginate lyase (378 aa).

Residues 1-28 (MQTPKLIRPTLLSMAILSSMAWATGASA) form the signal peptide. Residues 67–68 (SK), 140–141 (HT), and Tyr258 contribute to the substrate site.

The protein belongs to the polysaccharide lyase 5 family.

The protein localises to the periplasm. The catalysed reaction is Eliminative cleavage of alginate to give oligosaccharides with 4-deoxy-alpha-L-erythro-hex-4-enuronosyl groups at their non-reducing ends and beta-D-mannuronate at their reducing end.. With respect to regulation, the monovalent cation sodium enhances activity but is not absolutely required. Functionally, catalyzes the depolymerization of alginate by cleaving the beta-1,4 glycosidic bond between two adjacent sugar residues via a beta-elimination mechanism. Degrades deacetylated polymannuronate (polyM) alginate from P.aeruginosa more efficiently than non-deacetylated polyM and alginate from M.pyrifera. AlgL from P.syringae also degrades its own alginate, which may indicate a role in cleaving preformed alginate and/or in determining the length of the alginate polymer. May serve to degrade mislocalized alginate that is trapped in the periplasmic space. In Pseudomonas syringae pv. syringae, this protein is Alginate lyase.